Reading from the N-terminus, the 460-residue chain is Muscarinic acetylcholine receptor M1 (460 aa).

The Extracellular portion of the chain corresponds to 1–22 (MNTSVPPAVSPNITVLAPGKGP). Asn-2 and Asn-12 each carry an N-linked (GlcNAc...) asparagine glycan. Residues 23–48 (WQVAFIGITTGLLSLATVTGNLLVLI) traverse the membrane as a helical segment. At 49 to 62 (SFKVNTELKTVNNY) the chain is on the cytoplasmic side. The helical transmembrane segment at 63 to 84 (FLLSLACADLIIGTFSMNLYTT) threads the bilayer. The Extracellular segment spans residues 85–95 (YLLMGHWALGT). A helical membrane pass occupies residues 96–121 (LACDLWLALDYVASNASVMNLLLISF). Cysteines 98 and 178 form a disulfide. The Cytoplasmic segment spans residues 122–142 (DRYFSVTRPLSYRAKRTPRRA). The helical transmembrane segment at 143–164 (ALMIGLAWLVSFVLWAPAILFW) threads the bilayer. Residues 165-185 (QYLVGERTVLAGQCYIQFLSQ) are Extracellular-facing. Residues 186-209 (PIITFGTAMAAFYLPVTVMCTLYW) form a helical membrane-spanning segment. Residues 210–366 (RIYRETENRA…LVKEKKAART (157 aa)) lie on the Cytoplasmic side of the membrane. 3 disordered regions span residues 225–257 (LQGS…SPPG), 274–297 (WKEE…EEPG), and 310–351 (EAQA…QLAK). Residue Thr-230 is modified to Phosphothreonine. A compositionally biased stretch (low complexity) spans 238 to 257 (SSSSERSQPGAEGSPESPPG). Ser-254 is modified (phosphoserine). A compositionally biased stretch (basic residues) spans 328 to 343 (RPTKKGRDRGGKGQKP). The helical transmembrane segment at 367 to 390 (LSAILLAFILTWTPYNIMVLVSTF) threads the bilayer. Residues 391–397 (CKDCVPE) lie on the Extracellular side of the membrane. Residues 398 to 420 (TLWELGYWLCYVNSTVNPMCYAL) form a helical membrane-spanning segment. Residues 421 to 460 (CNKAFRDTFRLLLLCRWDKRRWRKIPKRPGSVHRTPSRQC) lie on the Cytoplasmic side of the membrane. At Ser-451 the chain carries Phosphoserine. Thr-455 bears the Phosphothreonine mark. Position 457 is a phosphoserine (Ser-457).

This sequence belongs to the G-protein coupled receptor 1 family. Muscarinic acetylcholine receptor subfamily. CHRM1 sub-subfamily. As to quaternary structure, interacts with GPRASP2. Interacts with TMEM147.

It is found in the cell membrane. The protein resides in the postsynaptic cell membrane. Functionally, the muscarinic acetylcholine receptor mediates various cellular responses, including inhibition of adenylate cyclase, breakdown of phosphoinositides and modulation of potassium channels through the action of G proteins. Primary transducing effect is Pi turnover. This Mus musculus (Mouse) protein is Muscarinic acetylcholine receptor M1 (Chrm1).